The following is a 160-amino-acid chain: Cytochrome c-type biogenesis protein CcmE (160 aa).

Over 1 to 9 the chain is Cytoplasmic; it reads MRGLKKKRR. Residues 10–30 form a helical; Signal-anchor for type II membrane protein membrane-spanning segment; sequence IQIIAIAAVALTIATIMIGTA. Topologically, residues 31-160 are periplasmic; the sequence is MRDGINFFRS…DGGYGGASGS (130 aa). H123 and Y127 together coordinate heme. The tract at residues 141-160 is disordered; sequence VYKDPNATDADGGYGGASGS.

This sequence belongs to the CcmE/CycJ family.

The protein resides in the cell inner membrane. Its function is as follows. Heme chaperone required for the biogenesis of c-type cytochromes. Transiently binds heme delivered by CcmC and transfers the heme to apo-cytochromes in a process facilitated by CcmF and CcmH. This is Cytochrome c-type biogenesis protein CcmE from Dinoroseobacter shibae (strain DSM 16493 / NCIMB 14021 / DFL 12).